We begin with the raw amino-acid sequence, 72 residues long: Large ribosomal subunit protein bL28 (72 aa).

The protein belongs to the bacterial ribosomal protein bL28 family.

In Chlorobaculum parvum (strain DSM 263 / NCIMB 8327) (Chlorobium vibrioforme subsp. thiosulfatophilum), this protein is Large ribosomal subunit protein bL28.